A 594-amino-acid polypeptide reads, in one-letter code: Estrogen receptor (594 aa).

Positions 1 to 184 (MTMTLHTKAS…AMESAKETRY (184 aa)) are modulating (transactivation AF-1); mediates interaction with MACROD1. O-linked (GlcNAc) serine glycosylation is present at serine 10. The segment at 35-47 (LERPLGEVYVESS) is required for interaction with NCOA1. The interaction with DDX5; self-association stretch occupies residues 35 to 174 (LERPLGEVYV…LASSGDKGSM (140 aa)). Phosphoserine; by CDK2 is present on residues serine 104 and serine 106. Serine 118 carries the post-translational modification Phosphoserine. The interval 152–173 (PNADNRRQGGRERLASSGDKGS) is disordered. A compositionally biased stretch (basic and acidic residues) spans 154–165 (ADNRRQGGRERL). Serine 167 carries the post-translational modification Phosphoserine; by CK2. 2 NR C4-type zinc fingers span residues 185-205 (CAVCNDYASGYHYGVWSCEGC) and 221-245 (CPATNQCTIDKNRRKSCQACRLRKC). The nuclear receptor DNA-binding region spans 185–250 (CAVCNDYASG…RLRKCYEVGM (66 aa)). The interval 185-310 (CAVCNDYASG…TKKISPVLSL (126 aa)) is mediates interaction with DNTTIP2. The interval 251–310 (MKGGIRKDRRGGRMLKHKRQRDDGEGRNEAGPSGDRRPANFWPSPLLIKHTKKISPVLSL) is hinge. Over residues 257-269 (KDRRGGRMLKHKR) the composition is skewed to basic residues. Residues 257–293 (KDRRGGRMLKHKRQRDDGEGRNEAGPSGDRRPANFWP) are disordered. Residue arginine 260 is modified to Asymmetric dimethylarginine; by PRMT1. The interaction with AKAP13 stretch occupies residues 262–594 (GRMLKHKRQR…GEAEGFPNTI (333 aa)). The segment at 264–594 (MLKHKRQRDD…GEAEGFPNTI (331 aa)) is self-association. A compositionally biased stretch (basic and acidic residues) spans 270-288 (QRDDGEGRNEAGPSGDRRP). The NR LBD domain maps to 311 to 546 (TAEQMISALL…DLLLEMLDAH (236 aa)). Residues 311-594 (TAEQMISALL…GEAEGFPNTI (284 aa)) are transactivation AF-2. Residues glutamate 353 and arginine 394 each contribute to the 17beta-estradiol site. Cysteine 447 is lipidated: S-palmitoyl cysteine. Residue histidine 523 participates in 17beta-estradiol binding. Tyrosine 536 is subject to Phosphotyrosine; by Tyr-kinases. The interval 551 to 575 (PANHGGAPMEETNQSQLATTGSTSP) is disordered. Polar residues predominate over residues 561-575 (ETNQSQLATTGSTSP). A glycan (O-linked (GlcNAc) threonine) is linked at threonine 570.

It belongs to the nuclear hormone receptor family. NR3 subfamily. Binds DNA as a homodimer. Can form a heterodimer with ESR2. Interacts with coactivator NCOA5. Interacts with PELP1, the interaction is enhanced by 17-beta-estradiol; the interaction increases ESR1 transcriptional activity. Interacts with NCOA7; the interaction is ligand-inducible. Interacts with AKAP13, CUEDC2, HEXIM1, KDM5A, MAP1S, SMARD1, and UBE1C. Interacts with MUC1; the interaction is stimulated by 7 beta-estradiol (E2) and enhances ESR1-mediated transcription. Interacts with DNTTIP2, and UIMC1. Interacts with KMT2D/MLL2. Interacts with ATAD2; the interaction is enhanced by estradiol. Interacts with KIF18A and LDB1. Interacts with RLIM (via its C-terminus). Interacts with MACROD1. Interacts with SH2D4A and PLCG. Interacts with SH2D4A; the interaction blocks binding to PLCG and inhibits estrogen-induced cell proliferation. Interacts with DYNLL1. Interacts with CCDC62; the interaction requires estradiol and appears to enhance the transcription of target genes. Interacts with NR2C1; the interaction prevents homodimerization of ESR1 and suppresses its transcriptional activity and cell growth. Interacts with DNAAF4. Interacts with PRMT2. Interacts with RBFOX2. Interacts with EP300; the interaction is estrogen-dependent and enhanced by CITED1. Interacts with CITED1; the interaction is estrogen-dependent. Interacts with FAM120B, FOXL2, PHB2 and SLC30A9. Interacts with coactivators NCOA3 and NCOA6. Interacts with STK3/MST2 only in the presence of SAV1 and vice-versa. Binds to CSNK1D. Interacts with NCOA2; NCOA2 can interact with ESR1 AF-1 and AF-2 domains simultaneously and mediate their transcriptional synergy. Interacts with DDX5. Interacts with NCOA1; the interaction seems to require a self-association of N-terminal and C-terminal regions. Interacts with ZNF366, DDX17, NFKB1, RELA, SP1 and SP3. Interacts with NRIP1. Interacts with GPER1; the interaction occurs in an estrogen-dependent manner. Interacts with CLOCK and the interaction is stimulated by estrogen. Interacts with TRIP4 (ufmylated); estrogen dependent. Interacts with LMTK3; the interaction phosphorylates ESR1 (in vitro) and protects it against proteasomal degradation. Interacts with CCAR2 (via N-terminus) in a ligand-independent manner. Interacts with ZFHX3. Interacts with SFR1 in a ligand-dependent and -independent manner. Interacts with DCAF13, LATS1 and DCAF1; regulates ESR1 ubiquitination and ubiquitin-mediated proteasomal degradation. Interacts (via DNA-binding domain) with POU4F2 (C-terminus); this interaction increases the estrogen receptor ESR1 transcriptional activity in a DNA- and ligand 17-beta-estradiol-independent manner. Interacts with ESRRB isoform 1. Interacts with UBE3A and WBP2. Interacts with GTF2B. Interacts with RBM39. In the absence of hormonal ligand, interacts with TACC1. Interacts with PI3KR1 or PI3KR2 and PTK2/FAK1. Interacts with SRC. Interacts with BAG1; the interaction is promoted in the absence of estradiol (17-beta-estradiol/E2). Interacts with and ubiquitinated by STUB1; the interaction is promoted in the absence of estradiol (17-beta-estradiol/E2). Interacts with NEDD8. In terms of processing, ubiquitinated; regulated by LATS1 via DCAF1 it leads to ESR1 proteasomal degradation. Deubiquitinated by OTUB1. Ubiquitinated by STUB1/CHIP; in the CA1 hippocampal region following loss of endogenous circulating estradiol (17-beta-estradiol/E2). Ubiquitinated by UBR5, leading to its degradation: UBR5 specifically recognizes and binds ligand-bound ESR1 when it is not associated with coactivators (NCOAs). In presence of NCOAs, the UBR5-degron is not accessible, preventing its ubiquitination and degradation. Post-translationally, phosphorylated by cyclin A/CDK2 and CK1. Phosphorylation probably enhances transcriptional activity. Dephosphorylation at Ser-118 by PPP5C inhibits its transactivation activity. Phosphorylated by LMTK3 (in vitro). Palmitoylated at Cys-447 by ZDHHC7 and ZDHHC21. Palmitoylation is required for plasma membrane targeting and for rapid intracellular signaling via ERK and AKT kinases and cAMP generation, but not for signaling mediated by the nuclear hormone receptor. In terms of processing, dimethylated by PRMT1 at Arg-260. The methylation may favor cytoplasmic localization. Demethylated by JMJD6 at Arg-260.

The protein resides in the nucleus. The protein localises to the cytoplasm. It is found in the golgi apparatus. Its subcellular location is the cell membrane. Functionally, nuclear hormone receptor. The steroid hormones and their receptors are involved in the regulation of eukaryotic gene expression and affect cellular proliferation and differentiation in target tissues. Ligand-dependent nuclear transactivation involves either direct homodimer binding to a palindromic estrogen response element (ERE) sequence or association with other DNA-binding transcription factors, such as AP-1/c-Jun, c-Fos, ATF-2, Sp1 and Sp3, to mediate ERE-independent signaling. Ligand binding induces a conformational change allowing subsequent or combinatorial association with multiprotein coactivator complexes through LXXLL motifs of their respective components. Mutual transrepression occurs between the estrogen receptor (ER) and NF-kappa-B in a cell-type specific manner. Decreases NF-kappa-B DNA-binding activity and inhibits NF-kappa-B-mediated transcription from the IL6 promoter and displace RELA/p65 and associated coregulators from the promoter. Recruited to the NF-kappa-B response element of the CCL2 and IL8 promoters and can displace CREBBP. Present with NF-kappa-B components RELA/p65 and NFKB1/p50 on ERE sequences. Can also act synergistically with NF-kappa-B to activate transcription involving respective recruitment adjacent response elements; the function involves CREBBP. Can activate the transcriptional activity of TFF1. Also mediates membrane-initiated estrogen signaling involving various kinase cascades. Essential for MTA1-mediated transcriptional regulation of BRCA1 and BCAS3. Maintains neuronal survival in response to ischemic reperfusion injury when in the presence of circulating estradiol (17-beta-estradiol/E2). This chain is Estrogen receptor (ESR1), found in Equus caballus (Horse).